The following is a 210-amino-acid chain: Large ribosomal subunit protein uL3 (210 aa).

Belongs to the universal ribosomal protein uL3 family. In terms of assembly, part of the 50S ribosomal subunit. Forms a cluster with proteins L14 and L19.

In terms of biological role, one of the primary rRNA binding proteins, it binds directly near the 3'-end of the 23S rRNA, where it nucleates assembly of the 50S subunit. The chain is Large ribosomal subunit protein uL3 from Pseudothermotoga lettingae (strain ATCC BAA-301 / DSM 14385 / NBRC 107922 / TMO) (Thermotoga lettingae).